The chain runs to 250 residues: Eukaryotic translation initiation factor 3 subunit K (250 aa).

Residues 46–229 (FDCYANLALL…KENEARSEVK (184 aa)) enclose the PCI domain.

This sequence belongs to the eIF-3 subunit K family. In terms of assembly, component of the eukaryotic translation initiation factor 3 (eIF-3) complex.

It localises to the cytoplasm. In terms of biological role, component of the eukaryotic translation initiation factor 3 (eIF-3) complex, which is involved in protein synthesis of a specialized repertoire of mRNAs and, together with other initiation factors, stimulates binding of mRNA and methionyl-tRNAi to the 40S ribosome. The eIF-3 complex specifically targets and initiates translation of a subset of mRNAs involved in cell proliferation. The polypeptide is Eukaryotic translation initiation factor 3 subunit K (Emericella nidulans (strain FGSC A4 / ATCC 38163 / CBS 112.46 / NRRL 194 / M139) (Aspergillus nidulans)).